A 503-amino-acid chain; its full sequence is D-xylose-proton symporter-like 2 (503 aa).

Polar residues predominate over residues 1-15; that stretch reads MALDPEQQQPISSVS. Positions 1–32 are disordered; sequence MALDPEQQQPISSVSREFGKSSGEISPEREPL. The residue at position 2 (alanine 2) is an N-acetylalanine. Serine 26 carries the post-translational modification Phosphoserine. A run of 12 helical transmembrane segments spans residues 42–62, 99–119, 124–144, 146–166, 187–207, 213–233, 305–325, 346–366, 375–395, 400–420, 437–457, and 467–487; these read YSVV…LLYG, GSLY…DVIG, LILA…APTY, VLII…HAAP, FFIV…VNVH, MYAT…WLPA, ALII…PSVL, VSIL…VVID, LGGV…YLFF, VVAV…FGPI, GLSL…FAFS, and ILFC…FFIV.

Belongs to the major facilitator superfamily. Sugar transporter (TC 2.A.1.1) family.

Its subcellular location is the membrane. The chain is D-xylose-proton symporter-like 2 from Arabidopsis thaliana (Mouse-ear cress).